Here is a 30-residue protein sequence, read N- to C-terminus: Antifungal protein Lap (30 aa).

In terms of biological role, displays antifungal activity against M.arachidicola and P.piricola, but not against R.solani, C.gossypii and C.comatus. Inhibits mycelial growth in P.piricola with an IC(50) of 70 nM. Displays very low cell-free translation inhibitory activity in a rabbit reticulocyte lysate system (IC(50)=70 uM) but is able to inhibit HIV-1 reverse transcriptase activity (IC(50)=5.2 nM). In Lyophyllum shimeji (Hon-shimeji), this protein is Antifungal protein Lap.